The primary structure comprises 200 residues: ATP-dependent Clp protease proteolytic subunit (200 aa).

Catalysis depends on Ser102, which acts as the Nucleophile. His127 is a catalytic residue.

This sequence belongs to the peptidase S14 family. Fourteen ClpP subunits assemble into 2 heptameric rings which stack back to back to give a disk-like structure with a central cavity, resembling the structure of eukaryotic proteasomes.

It localises to the cytoplasm. It carries out the reaction Hydrolysis of proteins to small peptides in the presence of ATP and magnesium. alpha-casein is the usual test substrate. In the absence of ATP, only oligopeptides shorter than five residues are hydrolyzed (such as succinyl-Leu-Tyr-|-NHMec, and Leu-Tyr-Leu-|-Tyr-Trp, in which cleavage of the -Tyr-|-Leu- and -Tyr-|-Trp bonds also occurs).. Functionally, cleaves peptides in various proteins in a process that requires ATP hydrolysis. Has a chymotrypsin-like activity. Plays a major role in the degradation of misfolded proteins. The polypeptide is ATP-dependent Clp protease proteolytic subunit (Dehalococcoides mccartyi (strain ATCC BAA-2266 / KCTC 15142 / 195) (Dehalococcoides ethenogenes (strain 195))).